The primary structure comprises 145 residues: Histone H2B (145 aa).

A disordered region spans residues 1 to 52 (MAPKAAAGKKPAEKKPVEEKKAEEVPAEKKPKAGKKLPKDAGRPDKKKKRAK). Residues Lys9, Lys35, and Lys36 each carry the N6-acetyllysine modification. Basic and acidic residues predominate over residues 10–44 (KPAEKKPVEEKKAEEVPAEKKPKAGKKLPKDAGRP). A Glycyl lysine isopeptide (Lys-Gly) (interchain with G-Cter in ubiquitin) cross-link involves residue Lys141.

It belongs to the histone H2B family. As to quaternary structure, the nucleosome is a histone octamer containing two molecules each of H2A, H2B, H3 and H4 assembled in one H3-H4 heterotetramer and two H2A-H2B heterodimers. The octamer wraps approximately 147 bp of DNA. In terms of processing, can be acetylated to form H2BK6ac, H2BK33ac and H2BK34ac. Monoubiquitinated to form H2BK143ub1; may give a specific tag for epigenetic transcriptional activation. In terms of tissue distribution, in anthers, floral buds, pollen, petals and fruits.

It localises to the nucleus. Its subcellular location is the chromosome. In terms of biological role, core component of nucleosome. Nucleosomes wrap and compact DNA into chromatin, limiting DNA accessibility to the cellular machineries which require DNA as a template. Histones thereby play a central role in transcription regulation, DNA repair, DNA replication and chromosomal stability. DNA accessibility is regulated via a complex set of post-translational modifications of histones, also called histone code, and nucleosome remodeling. This Capsicum annuum (Capsicum pepper) protein is Histone H2B (HIS2B).